We begin with the raw amino-acid sequence, 202 residues long: Imidazoleglycerol-phosphate dehydratase (202 aa).

It belongs to the imidazoleglycerol-phosphate dehydratase family.

Its subcellular location is the cytoplasm. The enzyme catalyses D-erythro-1-(imidazol-4-yl)glycerol 3-phosphate = 3-(imidazol-4-yl)-2-oxopropyl phosphate + H2O. It functions in the pathway amino-acid biosynthesis; L-histidine biosynthesis; L-histidine from 5-phospho-alpha-D-ribose 1-diphosphate: step 6/9. The polypeptide is Imidazoleglycerol-phosphate dehydratase (Rhizobium etli (strain ATCC 51251 / DSM 11541 / JCM 21823 / NBRC 15573 / CFN 42)).